The sequence spans 444 residues: Glutamyl-tRNA reductase (444 aa).

Substrate-binding positions include 41-44 (TCNR), serine 102, 107-109 (ERE), and glutamine 113. Catalysis depends on cysteine 42, which acts as the Nucleophile. 181–186 (GTGSYA) serves as a coordination point for NADP(+).

This sequence belongs to the glutamyl-tRNA reductase family. Homodimer.

It carries out the reaction (S)-4-amino-5-oxopentanoate + tRNA(Glu) + NADP(+) = L-glutamyl-tRNA(Glu) + NADPH + H(+). The protein operates within porphyrin-containing compound metabolism; protoporphyrin-IX biosynthesis; 5-aminolevulinate from L-glutamyl-tRNA(Glu): step 1/2. Its function is as follows. Catalyzes the NADPH-dependent reduction of glutamyl-tRNA(Glu) to glutamate 1-semialdehyde (GSA). The sequence is that of Glutamyl-tRNA reductase from Cutibacterium acnes (strain DSM 16379 / KPA171202) (Propionibacterium acnes).